The following is a 364-amino-acid chain: Large ribosomal subunit protein uL22m (364 aa).

Belongs to the universal ribosomal protein uL22 family. In terms of assembly, component of the mitochondrial large ribosomal subunit (mt-LSU). Mature N.crassa 74S mitochondrial ribosomes consist of a small (37S) and a large (54S) subunit. The 37S small subunit contains a 16S ribosomal RNA (16S mt-rRNA) and 32 different proteins. The 54S large subunit contains a 23S rRNA (23S mt-rRNA) and 42 different proteins. uL22m forms the wall of the exit tunnel.

The protein localises to the mitochondrion. Functionally, component of the mitochondrial ribosome (mitoribosome), a dedicated translation machinery responsible for the synthesis of mitochondrial genome-encoded proteins, including at least some of the essential transmembrane subunits of the mitochondrial respiratory chain. The mitoribosomes are attached to the mitochondrial inner membrane and translation products are cotranslationally integrated into the membrane. The chain is Large ribosomal subunit protein uL22m (mrpl22) from Neurospora crassa (strain ATCC 24698 / 74-OR23-1A / CBS 708.71 / DSM 1257 / FGSC 987).